The following is a 372-amino-acid chain: Spermidine/putrescine import ATP-binding protein PotA (372 aa).

The ABC transporter domain maps to 12 to 250 (VSIRSVRKVY…PRNRFVADFI (239 aa)). 48–55 (GPSGCGKT) contributes to the ATP binding site.

Belongs to the ABC transporter superfamily. Spermidine/putrescine importer (TC 3.A.1.11.1) family. As to quaternary structure, the complex is composed of two ATP-binding proteins (PotA), two transmembrane proteins (PotB and PotC) and a solute-binding protein (PotD).

Its subcellular location is the cell inner membrane. It carries out the reaction ATP + H2O + polyamine-[polyamine-binding protein]Side 1 = ADP + phosphate + polyamineSide 2 + [polyamine-binding protein]Side 1.. In terms of biological role, part of the ABC transporter complex PotABCD involved in spermidine/putrescine import. Responsible for energy coupling to the transport system. The sequence is that of Spermidine/putrescine import ATP-binding protein PotA from Pseudomonas fluorescens (strain ATCC BAA-477 / NRRL B-23932 / Pf-5).